Here is a 213-residue protein sequence, read N- to C-terminus: Ras-related protein Rab-25 (213 aa).

GTP is bound by residues serine 21, glycine 24, lysine 25, threonine 26, asparagine 27, serine 38, histidine 39, threonine 43, and threonine 44. Position 26 (threonine 26) interacts with Mg(2+). 2 consecutive short sequence motifs (switch) follow at residues 35-49 (NEFS…GVEF) and 67-84 (DTAG…YYRG). Residues threonine 44 and aspartate 67 each contribute to the Mg(2+) site. Residues glycine 70, asparagine 125, lysine 126, aspartate 128, alanine 156, and leucine 157 each coordinate GTP. 2 S-geranylgeranyl cysteine lipidation sites follow: cysteine 209 and cysteine 210. The residue at position 210 (cysteine 210) is a Cysteine methyl ester. The propeptide at 211-213 (ISL) is removed in mature form.

This sequence belongs to the small GTPase superfamily. Rab family. Interacts (GTP-bound form) with RAB11FIP1, RAB11FIP2, RAB11FIP3 and RAB11FIP4. Interacts (via the hypervariable C-terminal region) with ITGB1 (via the cytoplasmic region); the interaction is GTP-dependent. Interacts with ITGAV. Associates with the integrin alpha-V/beta-1 heterodimer. Interacts with VPS33B. It depends on Mg(2+) as a cofactor.

Its subcellular location is the cell membrane. The protein resides in the cell projection. The protein localises to the pseudopodium membrane. It localises to the cytoplasmic vesicle. It catalyses the reaction GTP + H2O = GDP + phosphate + H(+). Regulated by guanine nucleotide exchange factors (GEFs) which promote the exchange of bound GDP for free GTP. Regulated by GTPase activating proteins (GAPs) which increase the GTP hydrolysis activity. Inhibited by GDP dissociation inhibitors (GDIs) which prevent Rab-GDP dissociation. Functionally, the small GTPases Rab are key regulators of intracellular membrane trafficking, from the formation of transport vesicles to their fusion with membranes. Rabs cycle between an inactive GDP-bound form and an active GTP-bound form that is able to recruit to membranes different set of downstream effectors directly responsible for vesicle formation, movement, tethering and fusion. RAB25 regulates epithelial cell differentiation, proliferation and survival, thereby playing key roles in tumorigenesis. Promotes invasive migration of cells in which it functions to localize and maintain integrin alpha-V/beta-1 at the tips of extending pseudopodia. Involved in the regulation of epithelial morphogenesis through the control of CLDN4 expression and localization at tight junctions. May selectively regulate the apical recycling pathway. Together with MYO5B regulates transcytosis. The polypeptide is Ras-related protein Rab-25 (Mus musculus (Mouse)).